We begin with the raw amino-acid sequence, 314 residues long: 2,3,4,5-tetrahydropyridine-2,6-dicarboxylate N-succinyltransferase (314 aa).

The Mg(2+) site is built by D163 and E180. The Acyl-anhydride intermediate role is filled by E196. Succinyl-CoA contacts are provided by residues R198, G213, S216, A239, 254–255 (EA), G262, K274, and 287–290 (RRNS).

Belongs to the type 2 tetrahydrodipicolinate N-succinyltransferase family. Homotrimer.

It is found in the cytoplasm. It catalyses the reaction (S)-2,3,4,5-tetrahydrodipicolinate + succinyl-CoA + H2O = (S)-2-succinylamino-6-oxoheptanedioate + CoA. Its pathway is amino-acid biosynthesis; L-lysine biosynthesis via DAP pathway; LL-2,6-diaminopimelate from (S)-tetrahydrodipicolinate (succinylase route): step 1/3. Its function is as follows. Catalyzes the conversion of the cyclic tetrahydrodipicolinate (THDP) into the acyclic N-succinyl-L-2-amino-6-oxopimelate using succinyl-CoA. The protein is 2,3,4,5-tetrahydropyridine-2,6-dicarboxylate N-succinyltransferase of Mycolicibacterium smegmatis (strain ATCC 700084 / mc(2)155) (Mycobacterium smegmatis).